The chain runs to 189 residues: Peptidyl-tRNA hydrolase (189 aa).

Residue tyrosine 14 coordinates tRNA. Histidine 19 functions as the Proton acceptor in the catalytic mechanism. Tyrosine 64, asparagine 66, and asparagine 112 together coordinate tRNA.

The protein belongs to the PTH family. As to quaternary structure, monomer.

It localises to the cytoplasm. It carries out the reaction an N-acyl-L-alpha-aminoacyl-tRNA + H2O = an N-acyl-L-amino acid + a tRNA + H(+). In terms of biological role, hydrolyzes ribosome-free peptidyl-tRNAs (with 1 or more amino acids incorporated), which drop off the ribosome during protein synthesis, or as a result of ribosome stalling. Its function is as follows. Catalyzes the release of premature peptidyl moieties from peptidyl-tRNA molecules trapped in stalled 50S ribosomal subunits, and thus maintains levels of free tRNAs and 50S ribosomes. This Clostridium botulinum (strain Okra / Type B1) protein is Peptidyl-tRNA hydrolase.